The following is a 170-amino-acid chain: CFA/I fimbrial subunit B (170 aa).

The signal sequence occupies residues 1–23 (MKFKKTIGAMALTTMFVAVSASA).

The protein belongs to the fimbrial CS1 protein family. As to quaternary structure, CFA/I fimbriae are rather rigid, thread-like filaments of 0.5-1 micrometer, with an apparent axial hole, and a diameter of 7 nanometers. A single CFA/I fimbria consists of about 100 identical protein subunits.

The protein resides in the fimbrium. Its function is as follows. Fimbriae (also called pili), polar filaments radiating from the surface of the bacterium to a length of 0.5-1.5 micrometers and numbering 100-300 per cell, enable bacteria to colonize the epithelium of specific host organs. The protein is CFA/I fimbrial subunit B (cfaB) of Escherichia coli.